Here is a 3726-residue protein sequence, read N- to C-terminus: Zinc finger homeobox protein 3 (3726 aa).

Disordered regions lie at residues 1–79 (MEGC…SKEV) and 95–129 (MEHH…VENL). The C2H2-type 1 zinc-finger motif lies at 79-103 (VSCNECSASFSSLQTYMEHHCPGTH). Acidic residues predominate over residues 116–126 (TSEEGEEESDV). Residues 282–305 (LMCFLCKLSFGYVRSFVTHAVHDH) form a C2H2-type 2 zinc finger. The tract at residues 417–557 (SVPLGPLASS…GPASTTSNSA (141 aa)) is disordered. The residue at position 426 (serine 426) is a Phosphoserine. Residue threonine 428 is modified to Phosphothreonine. The span at 431–459 (SEGKDSGAAEGDKQESGGHQDCFSEKVEP) shows a compositional bias: basic and acidic residues. 2 stretches are compositionally biased toward acidic residues: residues 460 to 491 (AEEE…EEEE) and 500 to 510 (DLEEELEDSPS). Residues 528–557 (SNPSISNSPLMPNVLQTLSRGPASTTSNSA) show a composition bias toward polar residues. A phosphoserine mark is found at serine 535 and serine 573. The disordered stretch occupies residues 590–621 (DFADESANKDSATAPEPNESTEGDDGGFVPHH). 3 C2H2-type zinc fingers span residues 641 to 664 (VECP…TMMH), 672 to 695 (LKCP…KEKH), and 727 to 751 (FRCE…SDKH). The segment at 805 to 829 (WRCEVCDYETNVARNLRIHMTSEKH) adopts a C2H2-type 6; atypical zinc-finger fold. A C2H2-type 7; degenerate zinc finger spans residues 946–969 (FQCAVCNKFTTDNLDMLGLHMNVE). The C2H2-type 8; atypical zinc-finger motif lies at 985-1009 (YQCKLCRYNTQLKANFQLHCKTDKH). The C2H2-type 9; atypical zinc-finger motif lies at 1041-1065 (LKCNACDYYTNSLEKLRLHTVNSRH). The C2H2-type 10; atypical zinc finger occupies 1089 to 1113 (YHCVLCNYSTKAKLNLIQHVRSMKH). Residues 1125–1228 (LQKGLPEEDE…KRPKASEEIK (104 aa)) form a disordered region. The segment covering 1149-1159 (DPEEPVEDAEG) has biased composition (acidic residues). 2 stretches are compositionally biased toward polar residues: residues 1175–1191 (GSGS…SSSQ) and 1199–1217 (SPAT…TPLS). A Phosphoserine modification is found at serine 1207. Residues 1233–1256 (YQCPYCKYSNADVNRLRVHAMTQH) form a C2H2-type 11; atypical zinc finger. The segment at 1262 to 1285 (LRCPLCQDMLNNKIHLQLHLTHLH) adopts a C2H2-type 12 zinc-finger fold. The segment at 1320 to 1361 (DGNSTLEEVGKQPEASEDPGKNILPPASMEHGGDLKPTSADP) is disordered. 3 C2H2-type zinc fingers span residues 1370–1395 (FLCW…NEVH), 1411–1433 (YRCN…SQYH), and 1439–1462 (TMCC…ETSH). Positions 1500–1539 (EEDKEEESDLEDKQSPTGSDSGSVQEDSGSEPKRALPFRK) are disordered. Residues 1514–1526 (SPTGSDSGSVQED) are compositionally biased toward polar residues. The C2H2-type 16 zinc-finger motif lies at 1555–1579 (YKCTVCKESFTQKNILLVHYNSVSH). A Phosphoserine modification is found at serine 1600. Residues 1606–1630 (FKCNTCNVAYSQSSTLEIHMRSVLH) form a C2H2-type 17 zinc finger. 3 disordered regions span residues 1639–1678 (LEAA…TATN), 1706–1738 (NPIS…QQQQ), and 1866–1943 (LSQS…PRIA). A compositionally biased stretch (low complexity) spans 1643-1669 (SGNSNGTGNSGGVSLSSSTPSPVGSSG). A compositionally biased stretch (basic and acidic residues) spans 1717 to 1727 (EPKEANRKKLA). Over residues 1866–1878 (LSQSHSALLQPSQ) the composition is skewed to low complexity. The span at 1879–1902 (HPEKKNKVVIKEKDKESQREREGP) shows a compositional bias: basic and acidic residues. The C2H2-type 18 zinc finger occupies 1990 to 2013 (LECDSCGKLFSNILILKSHQEHVH). 2 disordered regions span residues 2037–2089 (YPLR…AQPS) and 2211–2249 (NKDS…WGSK). The segment covering 2041–2066 (PQTPEPPPPPPPPPPPPLPTAPPQPA) has biased composition (pro residues). The segment at residues 2152–2211 (NKRPRTRITDDQLRVLRQYFDINNSPSEEQIKEMADKSGLPQKVIKHWFRNTLFKERQRN) is a DNA-binding region (homeobox 1). The span at 2214–2223 (SPYNFSNPPI) shows a compositional bias: polar residues. A DNA-binding region (homeobox 2) is located at residues 2249–2308 (KRSSRTRFTDYQLRVLQDFFDANAYPKDDEFEQLSNLLNLPTRVIVVWFQNARQKARKNY). The C2H2-type 19; atypical zinc finger occupies 2335-2358 (YQCKKCSLVFQRIFDLIKHQKKLC). A Glycyl lysine isopeptide (Lys-Gly) (interchain with G-Cter in SUMO1) cross-link involves residue lysine 2356. Disordered stretches follow at residues 2383–2405 (TPTS…APSA) and 2429–2529 (NSKA…PQQL). Positions 2458 to 2478 (QPKPEMQQQLEQLEQKTNAPQ) are enriched in low complexity. The span at 2479–2507 (PKLPQPAAPSLPQPPPQAPPPQCPLPQSS) shows a compositional bias: pro residues. The span at 2508 to 2521 (PSPSQLSHLPLKPL) shows a compositional bias: low complexity. The segment at 2539 to 2561 (YQCDQCKLAFPSFEHWQEHQQLH) adopts a C2H2-type 20 zinc-finger fold. Positions 2624 to 2626 (KRK) match the Nuclear localization signal motif. A disordered region spans residues 2628-2656 (EEKASASPGENDSGTGGEEPQRDKRLRTT). Phosphoserine is present on serine 2634. Residues 2650 to 2709 (DKRLRTTITPEQLEILYQKYLLDSNPTRKMLDHIAHEVGLKKRVVQVWFQNTRARERKGQ) constitute a DNA-binding region (homeobox 3). The segment at 2720 to 2743 (RRCPFCRALFKAKTALEAHIRSRH) adopts a C2H2-type 21 zinc-finger fold. Positions 2780–2789 (SHLPPSSSDG) are enriched in polar residues. The segment at 2780–2805 (SHLPPSSSDGQGVPLSPVSKTMELSP) is disordered. Phosphoserine is present on residues serine 2795 and serine 2804. Lysine 2815 participates in a covalent cross-link: Glycyl lysine isopeptide (Lys-Gly) (interchain with G-Cter in SUMO1); alternate. A Glycyl lysine isopeptide (Lys-Gly) (interchain with G-Cter in SUMO2); alternate cross-link involves residue lysine 2815. Positions 2850 to 2877 (AITDTTTGDEGNADNDSATGIATETKSS) are disordered. Phosphoserine is present on residues serine 2900 and serine 2904. The disordered stretch occupies residues 2920-2955 (VDYSETSSLADPCSPSPGASGSAGKSGDGGDRPGQK). Residues 2929-2944 (ADPCSPSPGASGSAGK) show a composition bias toward low complexity. A DNA-binding region (homeobox 4) is located at residues 2952–3011 (PGQKRFRTQMTNLQLKVLKSCFNDYRTPTMLECEVLGNDIGLPKRVVQVWFQNARAKEKK). The C2H2-type 22 zinc-finger motif lies at 3032 to 3056 (TECTLCGIKYSARLSVRDHIFSQQH). Disordered stretches follow at residues 3145-3274 (FTPA…AGTG) and 3415-3476 (QQQQ…SASA). The span at 3147–3156 (PANTALTSPK) shows a compositional bias: polar residues. Residues 3181–3199 (PSSASLSSPTPAQATMAMA) show a composition bias toward low complexity. Over residues 3200–3221 (PQPPPQPQQPQPPVQQPPPPPA) the composition is skewed to pro residues. Low complexity predominate over residues 3222–3234 (AQQIPAPQLTPQQ). Residues 3235 to 3267 (QRKDKDGEKGKEKEKAHKGKGEPLPVPKKEKGE) show a composition bias toward basic and acidic residues. Lysine 3262 is covalently cross-linked (Glycyl lysine isopeptide (Lys-Gly) (interchain with G-Cter in SUMO1)). A Phosphoserine modification is found at serine 3434. Over residues 3435–3453 (PDKDPAKESPKPEEQKNVP) the composition is skewed to basic and acidic residues. Serine 3457 is subject to Phosphoserine. The C2H2-type 23 zinc finger occupies 3552-3576 (YHCLACESALCGEEALSQHLESALH). Positions 3588–3726 (AKEHPSLLPH…TSVGTDTFRL (139 aa)) are disordered. 2 stretches are compositionally biased toward low complexity: residues 3605–3618 (STAS…HSND) and 3645–3677 (SRAS…VQPS). Serine 3616 bears the Phosphoserine mark. Serine 3700 is modified (phosphoserine). The span at 3715–3726 (GLTSVGTDTFRL) shows a compositional bias: polar residues.

In terms of assembly, interacts with ALKBH4 and PIAS3. Interacts with FNBP3. Interacts with ESR1, RUNX3, TRIM25, SMAD2 and SMAD3. In terms of processing, phosphorylated at Ser-2634 in both embryonic and adult brain. Phosphorylation at Ser-1600, Ser-2795, Ser-2804, Ser-2900, Ser-3434, Ser-3616 and Ser-3700 is restricted to the embryonic brain. Hyperphosphorylation in embryonic brain protects ZFHX3 from calpain/CAPN1-mediated degradation. Post-translationally, ubiquitinated, leading to its proteasomal degradation. Nuclear localization is essential for its sumoylation. As to expression, expressed in suprachiasmatic nucleus (SCN) of the brain (at protein level). Expressed in skeletal muscle. Levels of expression are high in myoblasts but low in differentiated muscle. Expressed in the heart, primarily in the atria.

The protein localises to the nucleus. It localises to the cytoplasm. Functionally, transcriptional regulator which can act as an activator or a repressor. Inhibits the enhancer element of the AFP gene by binding to its AT-rich core sequence. In concert with SMAD-dependent TGF-beta signaling can repress the transcription of AFP via its interaction with SMAD2/3. Regulates the circadian locomotor rhythms via transcriptional activation of neuropeptidergic genes which are essential for intercellular synchrony and rhythm amplitude in the suprachiasmatic nucleus (SCN) of the brain. Regulator of myoblasts differentiation through the binding to the AT-rich sequence of MYF6 promoter and promoter repression. Down-regulates the MUC5AC promoter in gastric cancer. In association with RUNX3, up-regulates CDKN1A promoter activity following TGF-beta stimulation. The chain is Zinc finger homeobox protein 3 (Zfhx3) from Mus musculus (Mouse).